The primary structure comprises 135 residues: Large ribosomal subunit protein uL16m (135 aa).

The protein belongs to the universal ribosomal protein uL16 family.

Its subcellular location is the mitochondrion. This Prototheca wickerhamii protein is Large ribosomal subunit protein uL16m (RPL16).